Reading from the N-terminus, the 243-residue chain is Large ribosomal subunit protein uL30 (243 aa).

Positions 1-31 (MADKILTPESQLKKSKAQQKSAEQVAAERAA) are disordered. Residues 18 to 28 (QQKSAEQVAAE) are compositionally biased toward low complexity.

This sequence belongs to the universal ribosomal protein uL30 family.

This is Large ribosomal subunit protein uL30 (RPL7) from Eremothecium gossypii (strain ATCC 10895 / CBS 109.51 / FGSC 9923 / NRRL Y-1056) (Yeast).